The primary structure comprises 211 residues: Ribosomal RNA small subunit methyltransferase G (211 aa).

S-adenosyl-L-methionine contacts are provided by residues Gly-76, Leu-81, 127 to 128, and Arg-142; that span reads VE.

It belongs to the methyltransferase superfamily. RNA methyltransferase RsmG family.

Its subcellular location is the cytoplasm. It carries out the reaction guanosine(527) in 16S rRNA + S-adenosyl-L-methionine = N(7)-methylguanosine(527) in 16S rRNA + S-adenosyl-L-homocysteine. Specifically methylates the N7 position of guanine in position 527 of 16S rRNA. The chain is Ribosomal RNA small subunit methyltransferase G from Vibrio campbellii (strain ATCC BAA-1116).